We begin with the raw amino-acid sequence, 551 residues long: ATP synthase subunit alpha, mitochondrial (551 aa).

210-217 (GDRQTGKT) is an ATP binding site.

The protein belongs to the ATPase alpha/beta chains family. In terms of assembly, F-type ATPases have 2 components, CF(1) - the catalytic core - and CF(0) - the membrane proton channel. CF(1) has five subunits: alpha(3), beta(3), gamma(1), delta(1), epsilon(1). CF(0) has three main subunits: a, b and c.

It is found in the mitochondrion. The protein localises to the mitochondrion inner membrane. Mitochondrial membrane ATP synthase (F(1)F(0) ATP synthase or Complex V) produces ATP from ADP in the presence of a proton gradient across the membrane which is generated by electron transport complexes of the respiratory chain. F-type ATPases consist of two structural domains, F(1) - containing the extramembraneous catalytic core, and F(0) - containing the membrane proton channel, linked together by a central stalk and a peripheral stalk. During catalysis, ATP synthesis in the catalytic domain of F(1) is coupled via a rotary mechanism of the central stalk subunits to proton translocation. Subunits alpha and beta form the catalytic core in F(1). Rotation of the central stalk against the surrounding alpha(3)beta(3) subunits leads to hydrolysis of ATP in three separate catalytic sites on the beta subunits. Subunit alpha does not bear the catalytic high-affinity ATP-binding sites. The protein is ATP synthase subunit alpha, mitochondrial (atp-1) of Neurospora crassa (strain ATCC 24698 / 74-OR23-1A / CBS 708.71 / DSM 1257 / FGSC 987).